The chain runs to 153 residues: Putative riboflavin kinase (153 aa).

Mg(2+)-binding residues include T28 and N30. E80 acts as the Nucleophile in catalysis.

Monomer. Zn(2+) is required as a cofactor. The cofactor is Mg(2+).

The protein localises to the cytoplasm. The catalysed reaction is riboflavin + ATP = FMN + ADP + H(+). It participates in cofactor biosynthesis; FMN biosynthesis; FMN from riboflavin (ATP route): step 1/1. Functionally, catalyzes the phosphorylation of riboflavin (vitamin B2) to form flavin-mononucleotide (FMN). The sequence is that of Putative riboflavin kinase from Drosophila melanogaster (Fruit fly).